Here is a 137-residue protein sequence, read N- to C-terminus: Beta-synuclein (137 aa).

Repeat copies occupy residues 20-30 (EKTKQGVTEAA) and 31-41 (EKTKEGVLYVG). The interval 20 to 67 (EKTKQGVTEAAEKTKEGVLYVGSKTKEGVVQGVASVAEKTKEQASHLG) is 4 X 11 AA tandem repeats of [EGS]-K-T-K-[EQ]-[GQ]-V-X(4). A 3; approximate repeat occupies 42 to 56 (SKTKEGVVQGVASVA). Residues 57 to 67 (EKTKEQASHLG) form repeat 4. Residues 88–97 (EFPTDLKPEE) are compositionally biased toward basic and acidic residues. The interval 88-137 (EFPTDLKPEEVAQEAAEEPLIEPLMEPEGESYEDSPQEEYQEYEPEAKGP) is disordered. A compositionally biased stretch (acidic residues) spans 98-131 (VAQEAAEEPLIEPLMEPEGESYEDSPQEEYQEYE). Residue Ser118 is modified to Phosphoserine; by BARK1, CK2 and GRK5.

The protein belongs to the synuclein family. In terms of processing, phosphorylated. Phosphorylation by G-protein coupled receptor kinases (GRK) is more efficient than phosphorylation by CK1, CK2 and CaM-kinase II. Expressed specifically in brain.

The protein resides in the cytoplasm. May be involved in neuronal plasticity. This Rattus norvegicus (Rat) protein is Beta-synuclein (Sncb).